A 396-amino-acid chain; its full sequence is E3 ubiquitin-protein transferase MAEA (396 aa).

Residues 121–153 (KKKRMDRMMVEHLLRCGYYNTAVKLARQSGIED) form the LisH domain. The 58-residue stretch at 159 to 216 (MFLTAKEVEESLERQETATCLAWCHDNKSRLRKMKSCLEFSLRIQEFIELIRQNKRMD) folds into the CTLH domain. An RING-Gid-type zinc finger spans residues 314–381 (CPVCSKSLNK…QDDKVICPRT (68 aa)).

In terms of assembly, identified in the CTLH complex that contains at least MAEA, RMND5A, GID8, WDR26, and RANBP9 and/or RANBP10 as the catalytic core. Interacts with F-actin.

Its subcellular location is the nucleus matrix. It localises to the cell membrane. The protein resides in the cytoplasm. It is found in the cytoskeleton. It catalyses the reaction S-ubiquitinyl-[E2 ubiquitin-conjugating enzyme]-L-cysteine + [acceptor protein]-L-lysine = [E2 ubiquitin-conjugating enzyme]-L-cysteine + N(6)-ubiquitinyl-[acceptor protein]-L-lysine.. Functionally, core component of the CTLH E3 ubiquitin-protein ligase complex that selectively accepts ubiquitin from UBE2H and mediates ubiquitination and subsequent proteasomal degradation of the transcription factor HBP1. MAEA and RMND5A are both required for catalytic activity of the CTLH E3 ubiquitin-protein ligase complex. MAEA is required for normal cell proliferation. The CTLH E3 ubiquitin-protein ligase complex is not required for the degradation of enzymes involved in gluconeogenesis, such as FBP1. Plays a role in erythroblast maturation and in the development of mature macrophages. Mediates the attachment of erythroid cell to mature macrophages; this MAEA-mediated contact inhibits erythroid cell apoptosis. Participates in erythroblastic island formation, which is the functional unit of definitive erythropoiesis. Associates with F-actin to regulate actin distribution in erythroblasts and macrophages. May contribute to nuclear architecture and cells division events. The protein is E3 ubiquitin-protein transferase MAEA (maea) of Danio rerio (Zebrafish).